A 1079-amino-acid polypeptide reads, in one-letter code: Intraflagellar transport protein 80 (1079 aa).

Residues 495-514 (GDMIRPSTVQNQPSTQGLPN) are disordered. Residues 501 to 514 (STVQNQPSTQGLPN) show a composition bias toward polar residues.

Its subcellular location is the cell projection. It is found in the cilium. The protein resides in the flagellum. The protein localises to the cytoplasm. It localises to the cytoskeleton. Its subcellular location is the flagellum axoneme. It is found in the flagellum basal body. Functionally, component of the intraflagellar transport complex B (IFT-B) involved in flagellar assembly. The protein is Intraflagellar transport protein 80 of Giardia intestinalis (strain ATCC 50803 / WB clone C6) (Giardia lamblia).